Here is a 344-residue protein sequence, read N- to C-terminus: Dihydroorotate dehydrogenase (quinone) (344 aa).

Residues Ala-61–Lys-65 and Thr-85 each bind FMN. Lys-65 lines the substrate pocket. Asn-110–Phe-114 lines the substrate pocket. FMN-binding residues include Asn-138 and Asn-171. Asn-171 contributes to the substrate binding site. The active-site Nucleophile is Ser-174. Position 176 (Asn-176) interacts with substrate. Residues Lys-216 and Thr-244 each coordinate FMN. Residue Asn-245 to Thr-246 participates in substrate binding. FMN-binding positions include Gly-267, Gly-296, and Tyr-317 to Ser-318.

This sequence belongs to the dihydroorotate dehydrogenase family. Type 2 subfamily. As to quaternary structure, monomer. The cofactor is FMN.

It is found in the cell membrane. It carries out the reaction (S)-dihydroorotate + a quinone = orotate + a quinol. The protein operates within pyrimidine metabolism; UMP biosynthesis via de novo pathway; orotate from (S)-dihydroorotate (quinone route): step 1/1. Its function is as follows. Catalyzes the conversion of dihydroorotate to orotate with quinone as electron acceptor. This is Dihydroorotate dehydrogenase (quinone) from Psychrobacter cryohalolentis (strain ATCC BAA-1226 / DSM 17306 / VKM B-2378 / K5).